Consider the following 777-residue polypeptide: MAAESTATAAITAELVSADKIEEDAPAPSTSADKVESLDVDSEAKKLLGLGQKHLVMGDIPAAVNAFQEAASLLGKKYGETANECGEAFFFYGKSLLELARMENGVLGNALEGVHVEEEEGEKTEEESLVENNDNIDEEAREELREQVYDAMGEKEAQKTEDKSLVKPEMDKEQETEMEKGGREDMDIGEPAEELQEKVKSAPDQLTETTEEGKGAAAPEGLSEAEVTSKKPDQEIPGAEEGKSVSETDVQEECREKGGQGEVIVSIEEKPKEASKEQPVVTLEKQGTPVEIEAVKPVDMGGDEPKEQVAASESERGKAILEQLVGQELPSAEESPEVTTQAADASAAEAGSEVSEKPGGQDTVLPQDGAVNGLSAAGDHASTKPQTNAEGLIGTKDGSALEKVRAELVPSQETKLSVEESEAAGDGVETEVAQGATEQSPEDKVKIAANEEAQDKEEQMKEGEETEGSEEEDKENDKAEETLNDSALENKSLQENEEEEIGNLELAWDMLDLAKIIFKRQDTKEAQLYAAQAHLKLGEVSVESENYLQAVEEFQACLNLQEQYLEAHDRLLAETHYQLGLAYGYNSQYDEAVAQFSKSIEVIEKRMAVLNEQMKEAEGSPTEYEKEIEELKELLPEIREKIEDAKESQRSGNVAELALKATLVESSTSGFTPSGGSSSVSMIASRKPTDGASSSNCVTDISHLVRKKRKPEEESPRKDDAKKAKQEPEVNGGSGDTISTGTEVAENMEEEAENKAESRAAVEGTVEAGATVESTAC.

Alanine 2 is modified (N-acetylalanine). At lysine 34 the chain carries N6-acetyllysine. The stretch at 44–77 is one TPR 1 repeat; the sequence is AKKLLGLGQKHLVMGDIPAAVNAFQEAASLLGKK. The tract at residues 117–128 is histone-binding; it reads EEEEGEKTEEES. Threonine 124 carries the phosphothreonine modification. Serine 128 is subject to Phosphoserine. Basic and acidic residues-rich tracts occupy residues 152–186, 227–259, and 267–276; these read MGEK…REDM, VTSK…EKGG, and IEEKPKEASK. A disordered region spans residues 152–496; that stretch reads MGEKEAQKTE…ALENKSLQEN (345 aa). Residues 211 to 244 are histone-binding; the sequence is EEGKGAAAPEGLSEAEVTSKKPDQEIPGAEEGKS. The residue at position 243 (lysine 243) is an N6-acetyllysine. Position 244 is a phosphoserine (serine 244). Lysine 285 is subject to N6-acetyllysine. Positions 303–319 are enriched in basic and acidic residues; the sequence is DEPKEQVAASESERGKA. Serine 312 carries the post-translational modification Phosphoserine. Residues 342-353 are compositionally biased toward low complexity; sequence AADASAAEAGSE. Serine 399, serine 411, and serine 440 each carry phosphoserine. The segment at 458–501 is histone-binding; sequence EQMKEGEETEGSEEEDKENDKAEETLNDSALENKSLQENEEEEI. Residues 464 to 474 are compositionally biased toward acidic residues; sequence EETEGSEEEDK. The residue at position 466 (threonine 466) is a Phosphothreonine. 3 positions are modified to phosphoserine: serine 469, serine 486, and serine 492. Over residues 484-493 the composition is skewed to polar residues; that stretch reads NDSALENKSL. 2 TPR repeats span residues 531 to 564 and 573 to 606; these read AQAH…QEQY and AETH…IEKR. Residues 593–648 adopt a coiled-coil conformation; the sequence is VAQFSKSIEVIEKRMAVLNEQMKEAEGSPTEYEKEIEELKELLPEIREKIEDAKES. Serine 651 is subject to Phosphoserine. A compositionally biased stretch (low complexity) spans 667–681; the sequence is STSGFTPSGGSSSVS. Positions 667–777 are disordered; sequence STSGFTPSGG…AGATVESTAC (111 aa). The residue at position 672 (threonine 672) is a Phosphothreonine. Serine 694 and serine 695 each carry phosphoserine. The short motif at 705–711 is the Nuclear localization signal element; sequence VRKKRKP. Over residues 710–728 the composition is skewed to basic and acidic residues; the sequence is KPEEESPRKDDAKKAKQEP. Residue serine 715 is modified to Phosphoserine. Residue lysine 725 forms a Glycyl lysine isopeptide (Lys-Gly) (interchain with G-Cter in SUMO1) linkage. Serine 734 is subject to Phosphoserine.

Belongs to the NASP family. Binds to linker H1 histones. Interacts with histones H2A, H2B, H3 and H4. Interacts with histone H3.3. Interacts with histones H3 and H4; NASP is a histone chaperone that stabilizes and maintains a soluble pool of histone H3-H4 dimers. Interacts with ASF1A and ASF1B; the interaction is probably indirect and mediated by H3-H4. Also binds to HSP90 in the cytoplasm. This interaction stimulates binding of NASP to H1-6/H1T.

Its subcellular location is the cytoplasm. The protein localises to the nucleus. Its function is as follows. Component of the histone chaperone network. Binds and stabilizes histone H3-H4 not bound to chromatin to maintain a soluble reservoir and modulate degradation by chaperone-mediated autophagy. Required for DNA replication, normal cell cycle progression and cell proliferation. Forms a cytoplasmic complex with HSP90 and H1 linker histones and stimulates HSP90 ATPase activity. NASP and H1 histone are subsequently released from the complex and translocate to the nucleus where the histone is released for binding to DNA. This Bos taurus (Bovine) protein is Nuclear autoantigenic sperm protein.